Consider the following 475-residue polypeptide: ATP synthase subunit beta, chloroplastic (475 aa).

155–162 is a binding site for ATP; sequence GGAGVGKT.

This sequence belongs to the ATPase alpha/beta chains family. In terms of assembly, F-type ATPases have 2 components, CF(1) - the catalytic core - and CF(0) - the membrane proton channel. CF(1) has five subunits: alpha(3), beta(3), gamma(1), delta(1), epsilon(1). CF(0) has four main subunits: a(1), b(1), b'(1) and c(9-12).

It is found in the plastid. Its subcellular location is the chloroplast thylakoid membrane. It carries out the reaction ATP + H2O + 4 H(+)(in) = ADP + phosphate + 5 H(+)(out). Its function is as follows. Produces ATP from ADP in the presence of a proton gradient across the membrane. The catalytic sites are hosted primarily by the beta subunits. This is ATP synthase subunit beta, chloroplastic from Ochrosphaera neapolitana.